The following is a 559-amino-acid chain: Alkaline phosphatase PhoK (559 aa).

The signal sequence occupies residues 1 to 19 (MLKHVAAALLLATAMPVVA). Residues aspartate 49 and threonine 89 each coordinate Zn(2+). The active-site Phosphothreonine intermediate is threonine 89. Cysteine 90 and cysteine 126 are oxidised to a cystine. Substrate is bound by residues asparagine 110 and 171–173 (KDR). A disulfide bridge connects residues cysteine 231 and cysteine 314. Zn(2+) contacts are provided by aspartate 300, histidine 304, aspartate 345, histidine 346, and histidine 491. A disulfide bond links cysteine 545 and cysteine 556.

In terms of assembly, monomer. It depends on Zn(2+) as a cofactor.

It localises to the secreted. The catalysed reaction is a phosphate monoester + H2O = an alcohol + phosphate. Functionally, alkaline phosphatase with broad substrate specificity. Precipitates uranium from alkaline solutions. The protein is Alkaline phosphatase PhoK of Sphingomonas sp.